A 104-amino-acid polypeptide reads, in one-letter code: Large ribosomal subunit protein bL21 (104 aa).

It belongs to the bacterial ribosomal protein bL21 family. Part of the 50S ribosomal subunit. Contacts protein L20.

In terms of biological role, this protein binds to 23S rRNA in the presence of protein L20. The protein is Large ribosomal subunit protein bL21 of Lactococcus lactis subsp. cremoris (strain MG1363).